The primary structure comprises 387 residues: Queuine tRNA-ribosyltransferase (387 aa).

Catalysis depends on aspartate 93, which acts as the Proton acceptor. Substrate-binding positions include 93 to 97 (DSGGF), aspartate 147, glutamine 190, and glycine 217. The segment at 248–254 (GVGTPDD) is RNA binding. The active-site Nucleophile is aspartate 267. Residues 272 to 276 (TRAGR) form an RNA binding; important for wobble base 34 recognition region. Cysteine 305, cysteine 307, cysteine 310, and histidine 336 together coordinate Zn(2+).

Belongs to the queuine tRNA-ribosyltransferase family. Homodimer. Within each dimer, one monomer is responsible for RNA recognition and catalysis, while the other monomer binds to the replacement base PreQ1. Zn(2+) serves as cofactor.

It carries out the reaction 7-aminomethyl-7-carbaguanine + guanosine(34) in tRNA = 7-aminomethyl-7-carbaguanosine(34) in tRNA + guanine. It functions in the pathway tRNA modification; tRNA-queuosine biosynthesis. Its function is as follows. Catalyzes the base-exchange of a guanine (G) residue with the queuine precursor 7-aminomethyl-7-deazaguanine (PreQ1) at position 34 (anticodon wobble position) in tRNAs with GU(N) anticodons (tRNA-Asp, -Asn, -His and -Tyr). Catalysis occurs through a double-displacement mechanism. The nucleophile active site attacks the C1' of nucleotide 34 to detach the guanine base from the RNA, forming a covalent enzyme-RNA intermediate. The proton acceptor active site deprotonates the incoming PreQ1, allowing a nucleophilic attack on the C1' of the ribose to form the product. After dissociation, two additional enzymatic reactions on the tRNA convert PreQ1 to queuine (Q), resulting in the hypermodified nucleoside queuosine (7-(((4,5-cis-dihydroxy-2-cyclopenten-1-yl)amino)methyl)-7-deazaguanosine). This chain is Queuine tRNA-ribosyltransferase, found in Gluconacetobacter diazotrophicus (strain ATCC 49037 / DSM 5601 / CCUG 37298 / CIP 103539 / LMG 7603 / PAl5).